The sequence spans 72 residues: Large ribosomal subunit protein bL31 (72 aa).

Zn(2+)-binding residues include Cys-16, Cys-18, Cys-38, and Cys-41.

It belongs to the bacterial ribosomal protein bL31 family. Type A subfamily. Part of the 50S ribosomal subunit. Requires Zn(2+) as cofactor.

In terms of biological role, binds the 23S rRNA. In Vibrio atlanticus (strain LGP32) (Vibrio splendidus (strain Mel32)), this protein is Large ribosomal subunit protein bL31.